Here is a 575-residue protein sequence, read N- to C-terminus: Beta-amylase 1, chloroplastic (575 aa).

The N-terminal 41 residues, 1–41 (MALNLSHQLGVLAGTPIKSGEMTDSSLLSISPPSARMMTPK), are a transit peptide targeting the chloroplast. Phosphoserine is present on residues Ser55 and Ser59. An intrachain disulfide couples Cys73 to Cys511. Substrate contacts are provided by Asp147, His187, and Asp195. The active-site Proton donor is the Glu279. Substrate contacts are provided by Lys392, His397, and Thr439. Residue Glu477 is the Proton acceptor of the active site. Substrate is bound by residues 478-479 (NA) and Arg517.

Belongs to the glycosyl hydrolase 14 family. In terms of tissue distribution, expressed in leaves, roots, flowers, pollen, and seeds.

The protein localises to the plastid. The protein resides in the chloroplast. The enzyme catalyses Hydrolysis of (1-&gt;4)-alpha-D-glucosidic linkages in polysaccharides so as to remove successive maltose units from the non-reducing ends of the chains.. Redox regulation; active in reducing conditions, inactive in oxidizing conditions. Thioredoxins f1, m1, and y1 mediate the reversible reductive activation of oxidized BAM1. Beta-amylase activity. Can use p-nitrophenyl maltopentaoside (PNPG5) as substrate only in reduced form. Can play a minor role in the starch degradation and maltose metabolism in chloroplasts during the night. More active on phosphorylated glucan. Interacts directly with starch or other alpha-1,4-glucan. The protein is Beta-amylase 1, chloroplastic (BAM1) of Arabidopsis thaliana (Mouse-ear cress).